The primary structure comprises 605 residues: Alpha-1,3-galactosidase B (605 aa).

An N-terminal signal peptide occupies residues 1–19 (MKRIIFNFCFVWLAVSAFA). 3 PbH1 repeats span residues 428-450 (CPEV…LFST), 451-473 (PLKT…LLCG), and 484-538 (CRNV…VIED).

Belongs to the glycosyl hydrolase 110 family. B subfamily.

It carries out the reaction Hydrolysis of terminal, non-reducing branched (1-&gt;3)-alpha-D-galactosidic residues, producing free D-galactose.. The enzyme catalyses Hydrolysis of terminal, non-reducing linear (1-&gt;3)-alpha-D-galactosidic residues, producing free D-galactose.. It catalyses the reaction Hydrolysis of terminal, non-reducing alpha-D-galactose residues in alpha-D-galactosides, including galactose oligosaccharides, galactomannans and galactolipids.. Functionally, alpha-galactosidase. Removes both branched alpha-1,3-linked galactose residues of blood group B antigens and linear alpha-1,3-linked galactose structures. The sequence is that of Alpha-1,3-galactosidase B (glaB2) from Phocaeicola vulgatus (strain ATCC 8482 / DSM 1447 / JCM 5826 / CCUG 4940 / NBRC 14291 / NCTC 11154) (Bacteroides vulgatus).